The following is a 516-amino-acid chain: 2-isopropylmalate synthase (516 aa).

A Pyruvate carboxyltransferase domain is found at 5–267 (VIIFDTTLRD…STNIVHKEIY (263 aa)). D14, H202, H204, and N238 together coordinate Mn(2+). Residues 392–516 (YLKFFSVQSI…NKKLKNLKKY (125 aa)) form a regulatory domain region.

It belongs to the alpha-IPM synthase/homocitrate synthase family. LeuA type 1 subfamily. As to quaternary structure, homodimer. Mn(2+) is required as a cofactor.

It is found in the cytoplasm. The catalysed reaction is 3-methyl-2-oxobutanoate + acetyl-CoA + H2O = (2S)-2-isopropylmalate + CoA + H(+). It participates in amino-acid biosynthesis; L-leucine biosynthesis; L-leucine from 3-methyl-2-oxobutanoate: step 1/4. In terms of biological role, catalyzes the condensation of the acetyl group of acetyl-CoA with 3-methyl-2-oxobutanoate (2-ketoisovalerate) to form 3-carboxy-3-hydroxy-4-methylpentanoate (2-isopropylmalate). In Buchnera aphidicola subsp. Diuraphis noxia, this protein is 2-isopropylmalate synthase.